Consider the following 195-residue polypeptide: Imidazoleglycerol-phosphate dehydratase (195 aa).

This sequence belongs to the imidazoleglycerol-phosphate dehydratase family.

Its subcellular location is the cytoplasm. It carries out the reaction D-erythro-1-(imidazol-4-yl)glycerol 3-phosphate = 3-(imidazol-4-yl)-2-oxopropyl phosphate + H2O. It participates in amino-acid biosynthesis; L-histidine biosynthesis; L-histidine from 5-phospho-alpha-D-ribose 1-diphosphate: step 6/9. This Cupriavidus pinatubonensis (strain JMP 134 / LMG 1197) (Cupriavidus necator (strain JMP 134)) protein is Imidazoleglycerol-phosphate dehydratase.